Reading from the N-terminus, the 470-residue chain is Probable V-type proton ATPase subunit H 2 (470 aa).

Belongs to the V-ATPase H subunit family. In terms of assembly, V-ATPase is a heteromultimeric enzyme made up of two complexes: the ATP-hydrolytic V1 complex and the proton translocation V0 complex. The V1 complex consists of three catalytic AB heterodimers that form a heterohexamer, three peripheral stalks each consisting of EG heterodimers, one central rotor including subunits D and F, and the regulatory subunits C and H. The proton translocation complex V0 consists of the proton transport subunit a, a ring of proteolipid subunits c9c'', rotary subunit d, subunits e and f, and the accessory subunits vah-19/Ac45 and vah-20/PRR.

Functionally, subunit of the V1 complex of vacuolar(H+)-ATPase (V-ATPase), a multisubunit enzyme composed of a peripheral complex (V1) that hydrolyzes ATP and a membrane integral complex (V0) that translocates protons. V-ATPase is responsible for acidifying and maintaining the pH of intracellular compartments and in some cell types, is targeted to the plasma membrane, where it is responsible for acidifying the extracellular environment. Subunit H is essential for V-ATPase activity, but not for the assembly of the complex. In Caenorhabditis elegans, this protein is Probable V-type proton ATPase subunit H 2.